Consider the following 139-residue polypeptide: MGMLNEFKAFAVKGNVVDMAVGIIIGAAFGKIVSSFVGDVIMPPLGLLIGGVDFSDLAITLKAAEGDVPAVVLAYGKFIQTVIDFVIVAFAIFMGVKAINRLKREEAVAPTTPPVPSAEETLLTEIRDLLKTQNQNRLP.

2 consecutive transmembrane segments (helical) span residues 9–29 and 79–99; these read AFAV…GAAF and IQTV…VKAI.

This sequence belongs to the MscL family. As to quaternary structure, homopentamer.

It is found in the cell inner membrane. Functionally, channel that opens in response to stretch forces in the membrane lipid bilayer. May participate in the regulation of osmotic pressure changes within the cell. The chain is Large-conductance mechanosensitive channel from Pseudomonas putida (strain GB-1).